The chain runs to 843 residues: Protein P (843 aa).

Residues 1-177 form a terminal protein domain (TP) region; sequence MPLSYQHFRR…FCGSPYSWEQ (177 aa). Residues 178–346 form a spacer region; it reads ELQHGSTSLN…YCLSHIINLL (169 aa). Disordered stretches follow at residues 180 to 202 and 226 to 315; these read QHGSTSLNGEKGHGTEPFCAQSS and QHKQ…VGSE. Basic residues predominate over residues 239–249; sequence RSGRLRSRVHT. 2 stretches are compositionally biased toward polar residues: residues 262–277 and 287–299; these read TGHSDNLATRSTSCFH and PSLSTSKGHTSTG. A polymerase/reverse transcriptase domain (RT) region spans residues 347–690; it reads EDWGPCYEHG…YMNLYPVARQ (344 aa). The Reverse transcriptase domain occupies 357 to 600; that stretch reads EHHIRTPKTP…YSLHFMGYII (244 aa). Positions 429, 551, and 552 each coordinate Mg(2+).

This sequence belongs to the hepadnaviridae P protein family.

It carries out the reaction DNA(n) + a 2'-deoxyribonucleoside 5'-triphosphate = DNA(n+1) + diphosphate. The catalysed reaction is Endonucleolytic cleavage to 5'-phosphomonoester.. Activated by host HSP70 and HSP40 in vitro to be able to bind the epsilon loop of the pgRNA. Because deletion of the RNase H region renders the protein partly chaperone-independent, the chaperones may be needed indirectly to relieve occlusion of the RNA-binding site by this domain. Inhibited by several reverse-transcriptase inhibitors: Lamivudine, Adefovir and Entecavir. In terms of biological role, multifunctional enzyme that converts the viral RNA genome into dsDNA in viral cytoplasmic capsids. This enzyme displays a DNA polymerase activity that can copy either DNA or RNA templates, and a ribonuclease H (RNase H) activity that cleaves the RNA strand of RNA-DNA heteroduplexes in a partially processive 3'- to 5'-endonucleasic mode. Neo-synthesized pregenomic RNA (pgRNA) are encapsidated together with the P protein, and reverse-transcribed inside the nucleocapsid. Initiation of reverse-transcription occurs first by binding the epsilon loop on the pgRNA genome, and is initiated by protein priming, thereby the 5'-end of (-)DNA is covalently linked to P protein. Partial (+)DNA is synthesized from the (-)DNA template and generates the relaxed circular DNA (RC-DNA) genome. After budding and infection, the RC-DNA migrates in the nucleus, and is converted into a plasmid-like covalently closed circular DNA (cccDNA). The activity of P protein does not seem to be necessary for cccDNA generation, and is presumably released from (+)DNA by host nuclear DNA repair machinery. This chain is Protein P, found in Hepatitis B virus genotype H (isolate United States/LAS2523/2002) (HBV-H).